Consider the following 808-residue polypeptide: LisH domain-containing protein ARMC9 (808 aa).

The 33-residue stretch at 7–39 (YEADLLGLVKEFLNFGEFQETLETFTKECKTKG) folds into the LisH domain. Residues 196 to 230 (ITLYKESLHNNQELLQQLQQQLMETEHKARTYKKC) adopt a coiled-coil conformation. Disordered regions lie at residues 576 to 599 (FDESIESDDEEEEKDDEEDEDALE), 650 to 709 (PLQR…DYCV), and 742 to 808 (GMEK…SYRK). Acidic residues predominate over residues 579 to 599 (SIESDDEEEEKDDEEDEDALE). Polar residues-rich tracts occupy residues 655–668 (VTPSTHRVMNTVRK), 677–709 (TNTFKTSQANMSVVSSRPPTRSGSRASTSDYCV), and 775–784 (IAPQFSQSGP). A compositionally biased stretch (low complexity) spans 785-808 (QQTSYSSSAGSSTRSRQSTQSYRK).

The protein resides in the cytoplasm. It is found in the cytoskeleton. Its subcellular location is the cilium basal body. The protein localises to the cell projection. It localises to the cilium. The protein resides in the microtubule organizing center. It is found in the centrosome. Its subcellular location is the centriole. Functionally, involved in ciliogenesis. It is required for appropriate acetylation and polyglutamylation of ciliary microtubules, and regulation of cilium length. Acts as a positive regulator of hedgehog (Hh)signaling. This is LisH domain-containing protein ARMC9 (armc9) from Xenopus tropicalis (Western clawed frog).